The sequence spans 446 residues: Phosphoglucosamine mutase (446 aa).

The active-site Phosphoserine intermediate is the Ser100. Residues Ser100, Asp239, Asp241, and Asp243 each coordinate Mg(2+). Ser100 carries the phosphoserine modification.

It belongs to the phosphohexose mutase family. Mg(2+) serves as cofactor. Post-translationally, activated by phosphorylation.

It carries out the reaction alpha-D-glucosamine 1-phosphate = D-glucosamine 6-phosphate. Its function is as follows. Catalyzes the conversion of glucosamine-6-phosphate to glucosamine-1-phosphate. This Oceanobacillus iheyensis (strain DSM 14371 / CIP 107618 / JCM 11309 / KCTC 3954 / HTE831) protein is Phosphoglucosamine mutase.